We begin with the raw amino-acid sequence, 1758 residues long: MSCSKAYGERYVASVQGSAPSPRKKSTRGFYFAKLYYEAKEYDLAKKYICTYINVREMDPRAHRFLGLLYELEENTEKAVECYRRSVELNPTQKDLVLKIAELLCKNDVTDGRAKYWVERAAKLFPGSPAIYKLKEQLLDCEGEDGWNKLFDLIQSELYVRPDDVHVNIRLVELYRSTKRLKDAVARCHEAERNIALRSSLEWNSCVVQTLKEYLESLQCLESDKSDWRATNTDLLLAYANLMLLTLSTRDVQESRELLESFDSALQSAKSSLGGNDELSATFLEMKGHFYMHAGSLLLKMGQHGNNVQWRALSELAALCYLIAFQVPRPKIKLIKGEAGQNLLEMMACDRLSQSGHMLLNLSRGKQDFLKVVVETFANKSGQSALYDALFSSQSPKDTSFLGSDDIGNIDVQEPELEDLARYDVGAIRAHNGSLQHLTWLGLQWNSLPALPGIRKWLKQLFHHLPQETSRLETNAPESICILDLEVFLLGVVYTSHLQLKEKCNSHHSSYQPLCLPLPVCKQLCTERQKSWWDAVCTLIHRKAVPGNSAKLRLLVQHEINTLRAQEKHGLQPALLVHWAKCLQKMGSGLNSFYDQREYIGRSVHYWKKVLPLLKIIKKKNSIPEPIDPLFKHFHSVDIQASEIVEYEEDAHVTFAILDAVNGNIEDAMTAFESIKSVVSYWNLALIFHRKAEDIANDALSPEEQEECKNYLRKTRGYLIKILDDSDSNLSVVKKLPVPLESVKEMLKSVMQELENYSEGDPLYKNGSLRNADSEIKHSTPSPTKYSLSPSKSYKYSPKTPPRWAEDQNSLLKMIRQEVKAIKEEMQELKLNSSKSASHHRWPTENYGPDSVPDGYQGSQTFHGAPLTVATTGPSVYYSQSPAYNSQYLLRPAANVTPTKGSSNTEFKSTKEGFSIPVSADGFKFGISEPGNQEKESEKPLENDTGFQAQDISGQKNGRGVIFGQTSSTFTFADVAKSTSGEGFQFGKKDPNFKGFSGAGEKLFSSQCGKMANKANTSGDFEKDDDAYKTEDSDDIHFEPVVQMPEKVELVIGEEGEKVLYSQGVKLFRFDAEVRQWKERGLGNLKILKNEVNGKPRMLMRREQVLKVCANHWITTTMNLKPLSGSDRAWMWSASDFSDGDAKLERLAAKFKTPELAEEFKQKFEECQQLLLDIPLQTPHKLVDTGRAAKLIQRAEEMKSGLKDFKTFLTNDQTKVTEEENKGSGTGAAGASDTTIKPNPENTGPTLEWDNCDLREDALDDSVSSSSVHASPLASSPVRKNLFHFGESTTGSNFSFKSALSPSKSPAKLNQSGTSVGTDEESDVTQEEERDGQYFEPVVPLPDLVEVSSGEENEKVVFSHRAELYRYDKDVGQWKERGIGDIKILQNYDNKQVRIVMRRDQVLKLCANHTITPDMSLQNMKGTERVWVWTACDFADGERKVEHLAVRFKLQDVADSFKKIFDEAKTAQEKDSLITPHVSRSSTPRESPCGKIAVAVLEETTRERTDVIQGDDVADAASEVEVSSTSETTTKAVVSPPKFVFGSESVKRIFSSEKSKPFAFGNSSATGSLFGFSFNASLKSNNSETSSVAQSGSESKVEPKKCELSKNSDIEQSSDSKVKNLSASFPMEESSINYTFKTPEKEPPLWHAEFTKEELVQKLSSTTKSADHLNGLLREAEATSAVLMEQIKLLKSEIRRLERNQEQEESAANVEHLKNVLLQFIFLKPGSERERLLPVINTMLQLSPEEKGKLAAVAQGEE.

S21 bears the Phosphoserine mark. TPR repeat units follow at residues 60-93 (PRAH…NPTQ) and 584-617 (QKMG…LKII). The segment at 761 to 805 (DPLYKNGSLRNADSEIKHSTPSPTKYSLSPSKSYKYSPKTPPRWA) is disordered. A compositionally biased stretch (low complexity) spans 779-798 (STPSPTKYSLSPSKSYKYSP). The RanBD1 1 domain occupies 1037-1173 (HFEPVVQMPE…FEECQQLLLD (137 aa)). Disordered stretches follow at residues 1213-1249 (QTKV…TLEW) and 1295-1332 (SFKS…ERDG). Polar residues predominate over residues 1236–1245 (IKPNPENTGP). Positions 1295-1309 (SFKSALSPSKSPAKL) are enriched in low complexity. Acidic residues predominate over residues 1318-1330 (TDEESDVTQEEER). The RanBD1 2 domain maps to 1334–1470 (YFEPVVPLPD…FDEAKTAQEK (137 aa)). Residues 1583-1594 (SETSSVAQSGSE) show a composition bias toward polar residues. Positions 1583 to 1621 (SETSSVAQSGSESKVEPKKCELSKNSDIEQSSDSKVKNL) are disordered. The span at 1595 to 1618 (SKVEPKKCELSKNSDIEQSSDSKV) shows a compositional bias: basic and acidic residues. One can recognise a GRIP domain in the interval 1703 to 1753 (QEESAANVEHLKNVLLQFIFLKPGSERERLLPVINTMLQLSPEEKGKLAAV).

This is RanBP2-like and GRIP domain-containing protein 4 (RGPD4) from Homo sapiens (Human).